Consider the following 212-residue polypeptide: Pyridoxine/pyridoxamine 5'-phosphate oxidase (212 aa).

The tract at residues 1-20 (MSDSAMEPQNPLTSGDFTAA) is disordered. Residues 59-64 (RMVLLK), 74-75 (YT), Lys-81, and Gln-103 contribute to the FMN site. Residue Lys-64 coordinates substrate. Residues Tyr-121, Arg-125, and Ser-129 each contribute to the substrate site. FMN contacts are provided by residues 138-139 (QS) and Trp-183. 189–191 (RLH) is a binding site for substrate. Arg-193 lines the FMN pocket.

It belongs to the pyridoxamine 5'-phosphate oxidase family. In terms of assembly, homodimer. FMN is required as a cofactor.

The enzyme catalyses pyridoxamine 5'-phosphate + O2 + H2O = pyridoxal 5'-phosphate + H2O2 + NH4(+). The catalysed reaction is pyridoxine 5'-phosphate + O2 = pyridoxal 5'-phosphate + H2O2. The protein operates within cofactor metabolism; pyridoxal 5'-phosphate salvage; pyridoxal 5'-phosphate from pyridoxamine 5'-phosphate: step 1/1. Its pathway is cofactor metabolism; pyridoxal 5'-phosphate salvage; pyridoxal 5'-phosphate from pyridoxine 5'-phosphate: step 1/1. Functionally, catalyzes the oxidation of either pyridoxine 5'-phosphate (PNP) or pyridoxamine 5'-phosphate (PMP) into pyridoxal 5'-phosphate (PLP). The sequence is that of Pyridoxine/pyridoxamine 5'-phosphate oxidase from Azorhizobium caulinodans (strain ATCC 43989 / DSM 5975 / JCM 20966 / LMG 6465 / NBRC 14845 / NCIMB 13405 / ORS 571).